Reading from the N-terminus, the 353-residue chain is Methylthioribose-1-phosphate isomerase (353 aa).

The active-site Proton donor is Asp241.

The protein belongs to the eIF-2B alpha/beta/delta subunits family. MtnA subfamily.

The protein localises to the cytoplasm. The protein resides in the nucleus. It carries out the reaction 5-(methylsulfanyl)-alpha-D-ribose 1-phosphate = 5-(methylsulfanyl)-D-ribulose 1-phosphate. It participates in amino-acid biosynthesis; L-methionine biosynthesis via salvage pathway; L-methionine from S-methyl-5-thio-alpha-D-ribose 1-phosphate: step 1/6. In terms of biological role, catalyzes the interconversion of methylthioribose-1-phosphate (MTR-1-P) into methylthioribulose-1-phosphate (MTRu-1-P). This chain is Methylthioribose-1-phosphate isomerase (mri1), found in Danio rerio (Zebrafish).